The sequence spans 190 residues: Putative CRISPR system CMR subunit Cmr7 2 (190 aa).

The protein belongs to the CRISPR system Cmr7 family. Homodimer.

Its function is as follows. CRISPR (clustered regularly interspaced short palindromic repeat) is an adaptive immune system that provides protection against mobile genetic elements (viruses, transposable elements and conjugative plasmids). CRISPR clusters contain spacers, sequences complementary to antecedent mobile elements, and target invading nucleic acids. CRISPR clusters are transcribed and processed into CRISPR RNA (crRNA). This is Putative CRISPR system CMR subunit Cmr7 2 (cmr7b) from Saccharolobus solfataricus (strain ATCC 35092 / DSM 1617 / JCM 11322 / P2) (Sulfolobus solfataricus).